A 512-amino-acid polypeptide reads, in one-letter code: Cytochrome P450 26B1 (512 aa).

Cys-441 lines the heme pocket.

This sequence belongs to the cytochrome P450 family. It depends on heme as a cofactor.

Its subcellular location is the endoplasmic reticulum membrane. It is found in the microsome membrane. The catalysed reaction is all-trans-retinoate + reduced [NADPH--hemoprotein reductase] + O2 = all-trans-4-hydroxyretinoate + oxidized [NADPH--hemoprotein reductase] + H2O + H(+). The enzyme catalyses all-trans-retinoate + reduced [NADPH--hemoprotein reductase] + O2 = all-trans-18-hydroxyretinoate + oxidized [NADPH--hemoprotein reductase] + H2O + H(+). In terms of biological role, a cytochrome P450 monooxygenase involved in the metabolism of retinoates (RAs), the active metabolites of vitamin A, and critical signaling molecules in animals. RAs exist as at least four different isomers: all-trans-RA (atRA), 9-cis-RA, 13-cis-RA, and 9,13-dicis-RA, where atRA is considered to be the biologically active isomer, although 9-cis-RA and 13-cis-RA also have activity. Catalyzes the hydroxylation of atRA primarily at C-4 and C-18, thereby contributing to the regulation of atRA homeostasis and signaling. Hydroxylation of atRA limits its biological activity and initiates a degradative process leading to its eventual elimination. Involved in the convertion of atRA to all-trans-4-oxo-RA. Can oxidize all-trans-13,14-dihydroretinoate (DRA) to metabolites which could include all-trans-4-oxo-DRA, all-trans-4-hydroxy-DRA, all-trans-5,8-epoxy-DRA, and all-trans-18-hydroxy-DRA. Shows preference for the following substrates: atRA &gt; 9-cis-RA &gt; 13-cis-RA. Plays a central role in germ cell development: acts by degrading RAs in the developing testis, preventing STRA8 expression, thereby leading to delay of meiosis. Required for the maintenance of the undifferentiated state of male germ cells during embryonic development in Sertoli cells, inducing arrest in G0 phase of the cell cycle and preventing meiotic entry. Plays a role in skeletal development, both at the level of patterning and in the ossification of bone and the establishment of some synovial joints. Essential for postnatal survival. Its function is as follows. Also has a significant activity in oxidation of tazarotenic acid and may therefore metabolize that xenobiotic in vivo. The chain is Cytochrome P450 26B1 (Cyp26b1) from Mus musculus (Mouse).